Reading from the N-terminus, the 373-residue chain is MATSASSHLNKGIKQVYMSLPQGEKVQAMYIWIDGTGEGLRCKTRTLDSEPKGVEELPEWNFDGSSTFQSEGSNSDMYLVPAAMFRDPFRKDPNKLVFCEVFKYNRKPAETNLRHTCKRIMDMVSNQHPWFGMEQEYTLMGTDGHPFGWPSNGFPGPQGPYYCGVGADKAYGRDIVEAHYRACLYAGIKIAGTNAEVMPAQWEFQIGPCEGIDMGDHLWVARFILHRVCEDFGVIATFDPKPIPGNWNGAGCHTNFSTKAMREENGLKYIEESIEKLSKRHQYHIRAYDPKGGLDNARRLTGFHETSNINDFSAGVANRGASIRIPRTVGQEKKGYFEDRRPSANCDPFSVTEALIRTCLLNETGDEPFQYKN.

N-acetylalanine is present on A2. The segment at 2–25 (ATSASSHLNKGIKQVYMSLPQGEK) is required for glutamine-induced ubiquitination by CRL4(CRBN) and proteasomal degradation. N6-acetyllysine occurs at positions 11 and 14. In terms of domain architecture, GS beta-grasp spans 24–106 (EKVQAMYIWI…VFCEVFKYNR (83 aa)). Residue Y104 is modified to Phosphotyrosine. In terms of domain architecture, GS catalytic spans 113–373 (LRHTCKRIMD…TGDEPFQYKN (261 aa)). E134 serves as a coordination point for ATP. 4 residues coordinate Mn(2+): E134, E136, E196, and E203. Residue 203-208 (EFQIGP) coordinates ATP. Position 246-247 (246-247 (NW)) interacts with L-glutamate. H253 contacts Mn(2+). Residues 255–257 (NFS), R319, and R324 contribute to the ATP site. R319 serves as a coordination point for L-glutamate. 336–338 (YFE) is a binding site for ADP. E338 lines the Mn(2+) pocket. R340 is an L-glutamate binding site. Residue S343 is modified to Phosphoserine.

Belongs to the glutamine synthetase family. In terms of assembly, decamer; composed of two pentamers. Interacts with PALMD. Interacts with RHOJ. Interacts with BEST2; this interaction tethers a fraction of GLUL to the membrane, causing a decrease of cytosolic glutamine synthase (GS) activity and inhibits the chloride channel activity of BEST2 by affecting the gating at the aperture in the absence of intracellular glutamate. Requires Mg(2+) as cofactor. Mn(2+) serves as cofactor. Post-translationally, palmitoylated; undergoes autopalmitoylation. In terms of processing, acetylated by EP300/p300; acetylation is stimulated by increased glutamine levels and promotes ubiquitin-mediated proteasomal degradation. Ubiquitinated by ZNRF1. Ubiquitinated by the DCX (DDB1-CUL4-X-box) E3 ubiquitin-protein ligase complex called CRL4(CRBN), leading to proteasomal degradation.

Its subcellular location is the cytoplasm. The protein resides in the cytosol. It is found in the microsome. The protein localises to the mitochondrion. It localises to the cell membrane. The enzyme catalyses L-glutamate + NH4(+) + ATP = L-glutamine + ADP + phosphate + H(+). The catalysed reaction is L-cysteinyl-[protein] + hexadecanoyl-CoA = S-hexadecanoyl-L-cysteinyl-[protein] + CoA. Glutamine synthetase activity is inhibited by methionine sulfoximine (MSO). Glutamine synthetase that catalyzes the ATP-dependent conversion of glutamate and ammonia to glutamine. Its role depends on tissue localization: in the brain, it regulates the levels of toxic ammonia and converts neurotoxic glutamate to harmless glutamine, whereas in the liver, it is one of the enzymes responsible for the removal of ammonia. Plays a key role in ammonium detoxification during erythropoiesis: the glutamine synthetase activity is required to remove ammonium generated by porphobilinogen deaminase (HMBS) during heme biosynthesis to prevent ammonium accumulation and oxidative stress. Essential for proliferation of fetal skin fibroblasts. Independently of its glutamine synthetase activity, required for endothelial cell migration during vascular development. Involved in angiogenesis by regulating membrane localization and activation of the GTPase RHOJ, possibly by promoting RHOJ palmitoylation. May act as a palmitoyltransferase for RHOJ: able to autopalmitoylate and then transfer the palmitoyl group to RHOJ. Plays a role in ribosomal 40S subunit biogenesis. Through the interaction with BEST2, inhibits BEST2 channel activity by affecting the gating at the aperture in the absence of intracellular L-glutamate, but sensitizes BEST2 to intracellular L-glutamate, which promotes the opening of BEST2 and thus relieves its inhibitory effect on BEST2. This chain is Glutamine synthetase, found in Canis lupus familiaris (Dog).